We begin with the raw amino-acid sequence, 236 residues long: 7-cyano-7-deazaguanine synthase (236 aa).

7 to 17 is a binding site for ATP; sequence CSGGLDSVSLA. Cys-185, Cys-193, Cys-196, and Cys-199 together coordinate Zn(2+).

Belongs to the QueC family. Zn(2+) serves as cofactor.

The catalysed reaction is 7-carboxy-7-deazaguanine + NH4(+) + ATP = 7-cyano-7-deazaguanine + ADP + phosphate + H2O + H(+). Its pathway is purine metabolism; 7-cyano-7-deazaguanine biosynthesis. Catalyzes the ATP-dependent conversion of 7-carboxy-7-deazaguanine (CDG) to 7-cyano-7-deazaguanine (preQ(0)). This is 7-cyano-7-deazaguanine synthase from Rhizobium leguminosarum bv. trifolii (strain WSM2304).